The following is a 1318-amino-acid chain: Tetratricopeptide repeat protein 41 (1318 aa).

TPR repeat units follow at residues 401 to 434, 653 to 686, 819 to 852, 860 to 893, 993 to 1029, and 1047 to 1084; these read PRLE…KPCI, WIQE…PVRE, GRII…LLQS, LRAQ…LLRF, MEFL…KEKA, and SDTL…RAAH. Residues 1295 to 1318 form a disordered region; that stretch reads KPGFPRRSQIESKLLKTSDDPNKE. Residues 1302–1318 show a composition bias toward basic and acidic residues; it reads SQIESKLLKTSDDPNKE.

As to expression, highly expressed in lung and myeloid leukemia cell line (at protein level). Isoform 4: expressed in heart (at protein level).

It localises to the cytoplasm. The protein is Tetratricopeptide repeat protein 41 of Mus musculus (Mouse).